A 956-amino-acid chain; its full sequence is Translation initiation factor IF-2 (956 aa).

The interval 33 to 370 is disordered; that stretch reads SHASSVEEAD…PVTERKFHEL (338 aa). The span at 46–60 shows a compositional bias: polar residues; sequence IASSFSAGVTKNVQA. Positions 63 to 73 are enriched in basic and acidic residues; that stretch reads AKDKQVAEQKA. Residues 76–100 show a composition bias toward low complexity; that stretch reads AKATTPQPAASKAAEKPAAATQEAS. Composition is skewed to basic and acidic residues over residues 112–125, 134–143, and 179–192; these read FKAE…EQVA, SNDRKSDYRQ, and NDGH…DKNR. Residues 199–213 are compositionally biased toward low complexity; it reads RQQDTGRQGQTQAGA. Composition is skewed to basic and acidic residues over residues 234–258 and 266–276; these read ARQR…RQEA and QTEDKKHREAS. A compositionally biased stretch (low complexity) spans 277 to 293; it reads AKATESVASMAAASVAK. A compositionally biased stretch (basic and acidic residues) spans 303-320; that stretch reads NRPDKGHDRDHGLEDGQK. Over residues 325 to 343 the composition is skewed to low complexity; it reads SWNSQNQVRNQKNSNWNNN. Positions 344–354 are enriched in basic residues; it reads KKNKKGKHHKN. Residues 457–626 form the tr-type G domain; that stretch reads ERAPVVTIMG…LLVAEVEELK (170 aa). The tract at residues 466–473 is G1; it reads GHVDHGKT. Residue 466 to 473 participates in GTP binding; that stretch reads GHVDHGKT. A G2 region spans residues 491-495; it reads GITQH. Residues 512-515 form a G3 region; that stretch reads DTPG. Residues 512 to 516 and 566 to 569 each bind GTP; these read DTPGH and NKID. The tract at residues 566 to 569 is G4; sequence NKID. Residues 602–604 are G5; it reads SAK.

It belongs to the TRAFAC class translation factor GTPase superfamily. Classic translation factor GTPase family. IF-2 subfamily.

The protein localises to the cytoplasm. Functionally, one of the essential components for the initiation of protein synthesis. Protects formylmethionyl-tRNA from spontaneous hydrolysis and promotes its binding to the 30S ribosomal subunits. Also involved in the hydrolysis of GTP during the formation of the 70S ribosomal complex. The polypeptide is Translation initiation factor IF-2 (Streptococcus equi subsp. equi (strain 4047)).